We begin with the raw amino-acid sequence, 341 residues long: S-adenosylmethionine:tRNA ribosyltransferase-isomerase (341 aa).

This sequence belongs to the QueA family. As to quaternary structure, monomer.

It is found in the cytoplasm. The catalysed reaction is 7-aminomethyl-7-carbaguanosine(34) in tRNA + S-adenosyl-L-methionine = epoxyqueuosine(34) in tRNA + adenine + L-methionine + 2 H(+). Its pathway is tRNA modification; tRNA-queuosine biosynthesis. Its function is as follows. Transfers and isomerizes the ribose moiety from AdoMet to the 7-aminomethyl group of 7-deazaguanine (preQ1-tRNA) to give epoxyqueuosine (oQ-tRNA). This Chlorobium phaeovibrioides (strain DSM 265 / 1930) (Prosthecochloris vibrioformis (strain DSM 265)) protein is S-adenosylmethionine:tRNA ribosyltransferase-isomerase.